The sequence spans 381 residues: NF-kappa-B inhibitor-like protein 1 (381 aa).

A disordered region spans residues 1–34 (MSNPSPQAPEEEASTSVCRPQSCSMASASRRHRR). The span at 14 to 27 (STSVCRPQSCSMAS) shows a compositional bias: polar residues. ANK repeat units follow at residues 64–93 (AGQP…ADPA) and 97–134 (RHGD…IKNK). Disordered regions lie at residues 132–167 (KNKD…REWR) and 186–298 (EDDA…WRFG). Position 151 is a phosphoserine (S151). The span at 151-160 (SAEEEEDEEV) shows a compositional bias: acidic residues. Basic and acidic residues-rich tracts occupy residues 205–218 (RLAR…RQQL) and 237–290 (RQHE…RGAE).

Interacts with CACTIN (via N-terminal domain); the interaction occurs in a pro-inflammatory-independent manner. In terms of tissue distribution, high expression found in heart muscle, liver, kidney and skin. Not detected in spleen, lung and brain.

Its subcellular location is the nucleus. Its function is as follows. Involved in the regulation of innate immune response. Acts as negative regulator of Toll-like receptor and interferon-regulatory factor (IRF) signaling pathways. Contributes to the negative regulation of transcriptional activation of NF-kappa-B target genes in response to endogenous pro-inflammatory stimuli. This chain is NF-kappa-B inhibitor-like protein 1 (Nfkbil1), found in Mus musculus (Mouse).